Consider the following 525-residue polypeptide: Delta(24)-sterol reductase homolog dhcr-24 (525 aa).

The next 2 helical transmembrane spans lie at 27 to 47 (WVFV…VFDF) and 214 to 234 (SLFF…AATI). One can recognise an FAD-binding PCMH-type domain in the interval 47–239 (FRNRIVHAVN…VAATIKIIPC (193 aa)).

Belongs to the FAD-binding oxidoreductase/transferase type 4 family. FAD serves as cofactor.

It is found in the endoplasmic reticulum membrane. The protein localises to the golgi apparatus membrane. It catalyses the reaction cholesterol + NADP(+) = desmosterol + NADPH + H(+). The enzyme catalyses lanosterol + NADPH + H(+) = 24,25-dihydrolanosterol + NADP(+). It carries out the reaction 5alpha-cholest-8-en-3beta-ol + NADP(+) = zymosterol + NADPH + H(+). It functions in the pathway steroid biosynthesis; cholesterol biosynthesis. In terms of biological role, catalyzes the reduction of the delta-24 double bond of sterol intermediates during cholesterol biosynthesis. This is Delta(24)-sterol reductase homolog dhcr-24 from Caenorhabditis elegans.